The sequence spans 342 residues: uncharacterized protein (342 aa).

This is an uncharacterized protein from Acanthamoeba polyphaga (Amoeba).